Reading from the N-terminus, the 339-residue chain is D-alanine--D-alanine ligase (339 aa).

An ATP-grasp domain is found at 126–333 (KQVLDSAGIP…YSELVTRLVE (208 aa)). ATP is bound at residue 158–213 (AAELGYPLFVKPANLGSSVGISKVGSPEELDAALTLAFGLDRRVILEAMTPHKPRE). Positions 286, 300, and 302 each coordinate Mg(2+).

It belongs to the D-alanine--D-alanine ligase family. The cofactor is Mg(2+). Requires Mn(2+) as cofactor.

The protein localises to the cytoplasm. It catalyses the reaction 2 D-alanine + ATP = D-alanyl-D-alanine + ADP + phosphate + H(+). Its pathway is cell wall biogenesis; peptidoglycan biosynthesis. In terms of biological role, cell wall formation. This chain is D-alanine--D-alanine ligase, found in Deinococcus radiodurans (strain ATCC 13939 / DSM 20539 / JCM 16871 / CCUG 27074 / LMG 4051 / NBRC 15346 / NCIMB 9279 / VKM B-1422 / R1).